The following is an 846-amino-acid chain: Patched domain-containing protein 4 (846 aa).

The next 10 helical transmembrane spans lie at 41–61 (HPVF…LSAL), 230–250 (SILA…TATL), 265–285 (GLLG…IFFI), 293–313 (TLLG…FELL), 336–356 (VMVT…MGAS), 373–393 (VSIL…LVFA), 465–485 (PFVV…CLQI), 660–680 (PVLI…FLVI), 686–706 (FWLI…MTLW), and 718–738 (LIYT…TFVL). An SSD domain is found at 233-392 (ARSKVLVSLV…FSFFGSCLVF (160 aa)). N-linked (GlcNAc...) asparagine glycosylation is present at Asn-762. The next 2 membrane-spanning stretches (helical) occupy residues 765 to 785 (SFLI…FTLF) and 787 to 807 (CLLL…PVFL).

This sequence belongs to the patched family.

The protein resides in the membrane. Could act as a repressor of canonical hedgehog signaling by antagonizing the effects of SMO, as suggested by down-regulation of hedgehog target genes, including GLI1, PTCH1, and PTCH2 in PTCHD4-expressing cells. This Homo sapiens (Human) protein is Patched domain-containing protein 4 (PTCHD4).